Reading from the N-terminus, the 436-residue chain is 3-phosphoshikimate 1-carboxyvinyltransferase (436 aa).

3-phosphoshikimate contacts are provided by Lys-23, Ser-24, and Arg-28. Position 23 (Lys-23) interacts with phosphoenolpyruvate. Residues Gly-97 and Arg-126 each coordinate phosphoenolpyruvate. Residues Ser-171, Gln-173, Asp-323, and Lys-350 each coordinate 3-phosphoshikimate. Gln-173 is a phosphoenolpyruvate binding site. Asp-323 (proton acceptor) is an active-site residue. Residues Arg-354 and Arg-396 each coordinate phosphoenolpyruvate.

The protein belongs to the EPSP synthase family. As to quaternary structure, monomer.

Its subcellular location is the cytoplasm. The catalysed reaction is 3-phosphoshikimate + phosphoenolpyruvate = 5-O-(1-carboxyvinyl)-3-phosphoshikimate + phosphate. The protein operates within metabolic intermediate biosynthesis; chorismate biosynthesis; chorismate from D-erythrose 4-phosphate and phosphoenolpyruvate: step 6/7. In terms of biological role, catalyzes the transfer of the enolpyruvyl moiety of phosphoenolpyruvate (PEP) to the 5-hydroxyl of shikimate-3-phosphate (S3P) to produce enolpyruvyl shikimate-3-phosphate and inorganic phosphate. In Prochlorococcus marinus (strain MIT 9301), this protein is 3-phosphoshikimate 1-carboxyvinyltransferase.